A 102-amino-acid chain; its full sequence is Small ribosomal subunit protein uS10 (102 aa).

The protein belongs to the universal ribosomal protein uS10 family. In terms of assembly, part of the 30S ribosomal subunit.

Its function is as follows. Involved in the binding of tRNA to the ribosomes. The protein is Small ribosomal subunit protein uS10 of Thermotoga maritima (strain ATCC 43589 / DSM 3109 / JCM 10099 / NBRC 100826 / MSB8).